Consider the following 1452-residue polypeptide: Pleiotropic drug resistance protein 1 (1452 aa).

The 274-residue stretch at 152 to 425 (LNYLHILPNR…FEYMGFICPE (274 aa)) folds into the ABC transporter 1 domain. Position 185–192 (185–192 (GPPSSGKT)) interacts with ATP. Positions 504-716 (LLKACTAREY…AQNAIAVNEF (213 aa)) constitute an ABC transmembrane type-2 1 domain. The next 7 membrane-spanning stretches (helical) occupy residues 521-541 (FVYIFKMIQLTLMASITMTLF), 554-574 (GAVFLGALFYALIMIMFNGFS), 609-629 (IPITLVEVAIWVCMTYYVIGF), 640-660 (LLLLICVNQMASGLFRLMGAL), 664-684 (IIVANTFGSFVLLTVLVMGGF), 694-714 (WWIWGYWISPMMYAQNAIAVN), and 753-773 (IGAGALIGYVFLFNFLFAVAL). The interval 808 to 830 (LGKSSSEKGNDVRRSASSRSMSS) is disordered. A compositionally biased stretch (basic and acidic residues) spans 812–821 (SSEKGNDVRR). Positions 855 to 1107 (ITFDDIRYAV…HLIKYFEGID (253 aa)) constitute an ABC transporter 2 domain. Position 900 to 907 (900 to 907 (GVSGAGKT)) interacts with ATP. Residues 1180-1394 (TQCMACFWKQ…TLYGLIASQF (215 aa)) enclose the ABC transmembrane type-2 2 domain. Transmembrane regions (helical) follow at residues 1199–1219 (YTAVRIMFTFFIALMFGTIFW), 1239–1259 (YIAVLFLGVQNATTVQPVIAI), 1287–1307 (LPYLFLQTIIYGVIVYAMIGF), 1314–1334 (FFWYLFFMYFTLLYFTLYGMM), 1344–1364 (IAAIISSAFYAVWNLFCGFIV), 1375–1395 (WYYYICPISWTLYGLIASQFG), and 1421–1441 (FVGYVALILVGISVLFLFIFA).

This sequence belongs to the ABC transporter superfamily. ABCG family. PDR (TC 3.A.1.205) subfamily. In terms of tissue distribution, expressed in root hypodermal passage cells. Expressed in stem tissues, particularly the vasculature and nodes adjacent to leaf axils.

The protein localises to the cell membrane. Cellular strigolactone (SL) transporter required for the exudation of SL from the root to the soil. The presence of SL in the vicinity of the roots is required for development of symbiotic interactions with arbuscular mycorrhizal fungi (AMF). Transports SL in the above ground tissues and is required for the control of shoot branching. SL regulates plant shoot architecture by inhibiting the outgrowth of axillary buds. Involved in the regulation of shootward and outward directional strigolactone transport in roots. Due to its polar localization in root cells, mediates directional shootward strigolactone transport, as well as localized outward directional transport for exudation to the soil. This is Pleiotropic drug resistance protein 1 from Petunia hybrida (Petunia).